A 545-amino-acid chain; its full sequence is Leucine-rich repeat LGI family member 2 (545 aa).

The first 28 residues, 1–28, serve as a signal peptide directing secretion; sequence MALRRGGCGALGLLLLLLGAACLIPRSA. The region spanning 29 to 65 is the LRRNT domain; it reads QVRRLARCPATCSCTKESIICVGSSWVPRIVPGDISS. A glycan (N-linked (GlcNAc...) asparagine) is linked at Asn70. LRR repeat units follow at residues 86–107, 110–131, and 134–155; these read SLQL…AFAG, HLEY…AFRG, and DLTH…VFSD. One can recognise an LRRCT domain in the interval 167-217; the sequence is NKFECDCKAKWLYLWLKMTNSTVSDVLCIGPPEYQEKKLNDVTSFDYECTT. Asn186 carries N-linked (GlcNAc...) asparagine glycosylation. 7 EAR repeats span residues 219-261, 265-307, 311-358, 360-403, 407-450, 452-494, and 498-540; these read DFVV…EWDH, NFRS…KYDE, KFVK…KWNS, GFYS…QWNK, KFVP…RWNS, QFVE…QWDK, and LFKK…EHII. Residue Asn271 is glycosylated (N-linked (GlcNAc...) asparagine). A glycan (N-linked (GlcNAc...) asparagine) is linked at Asn402.

As to expression, brain, heart and placenta.

The protein localises to the secreted. Required for the development of soma-targeting inhibitory GABAergic synapses made by parvalbumin-positive basket cells. The protein is Leucine-rich repeat LGI family member 2 (LGI2) of Homo sapiens (Human).